The following is a 188-amino-acid chain: Transmembrane protein 160 (188 aa).

The N-terminal 96 residues, 1 to 96 (MGGGWWWARA…ISFMQSDMGR (96 aa)), are a transit peptide targeting the mitochondrion. The interval 24–52 (PPQRPRSGGARGSFAPGHGPRAGASPPPV) is disordered. S48 carries the post-translational modification Phosphoserine. A run of 2 helical transmembrane segments spans residues 102–122 (FFLL…VGLA) and 135–155 (AAVG…AVGL). Residues 168-188 (PEDDGTASAEGPDEAGRPPPE) form a disordered region.

Belongs to the TMEM160 family.

The protein localises to the mitochondrion inner membrane. In Homo sapiens (Human), this protein is Transmembrane protein 160.